The following is a 490-amino-acid chain: GTPase Der (490 aa).

2 EngA-type G domains span residues 3–166 (PVVA…MEDL) and 203–376 (IKLA…DSST). GTP is bound by residues 9–16 (GRPNVGKS), 56–60 (DTGGI), 118–121 (NKTD), 209–216 (GRPNVGKS), 256–260 (DTAGV), and 321–324 (NKWD). The KH-like domain maps to 377 to 461 (RRVGTSMLTR…PIRIQFKEGE (85 aa)).

The protein belongs to the TRAFAC class TrmE-Era-EngA-EngB-Septin-like GTPase superfamily. EngA (Der) GTPase family. Associates with the 50S ribosomal subunit.

GTPase that plays an essential role in the late steps of ribosome biogenesis. In Shigella flexneri serotype 5b (strain 8401), this protein is GTPase Der.